The following is a 237-amino-acid chain: tRNA (guanine-N(1)-)-methyltransferase (237 aa).

Residues G115 and 134 to 139 (LGDFVL) contribute to the S-adenosyl-L-methionine site.

It belongs to the RNA methyltransferase TrmD family. In terms of assembly, homodimer.

It localises to the cytoplasm. The enzyme catalyses guanosine(37) in tRNA + S-adenosyl-L-methionine = N(1)-methylguanosine(37) in tRNA + S-adenosyl-L-homocysteine + H(+). Its function is as follows. Specifically methylates guanosine-37 in various tRNAs. This Synechococcus sp. (strain RCC307) protein is tRNA (guanine-N(1)-)-methyltransferase.